A 201-amino-acid chain; its full sequence is Endoribonuclease YbeY (201 aa).

Positions 156, 160, and 166 each coordinate Zn(2+).

This sequence belongs to the endoribonuclease YbeY family. Zn(2+) serves as cofactor.

It is found in the cytoplasm. Functionally, single strand-specific metallo-endoribonuclease involved in late-stage 70S ribosome quality control and in maturation of the 3' terminus of the 16S rRNA. This chain is Endoribonuclease YbeY, found in Cupriavidus pinatubonensis (strain JMP 134 / LMG 1197) (Cupriavidus necator (strain JMP 134)).